The following is a 625-amino-acid chain: ATP-dependent rRNA helicase spb4 (625 aa).

Positions 14–42 (WDALTPSLAEWILDAIKSMGFEKMTPVQA) match the Q motif motif. The region spanning 45–246 (IPLFMGNKDV…RVGLRNPVKI (202 aa)) is the Helicase ATP-binding domain. 58–65 (AVTGSGKT) contributes to the ATP binding site. The DEAD box signature appears at 194 to 197 (DEAD). The Helicase C-terminal domain occupies 278 to 436 (ALLSLLSQLQ…TTDDAAKILI (159 aa)). Positions 550–597 (KKQREAWSQKHEKQDLKELKREKKKRKREIERLDKMTDEEKRVEQEKE) are disordered. Composition is skewed to basic and acidic residues over residues 553–570 (REAW…ELKR) and 577–597 (REIE…QEKE). The stretch at 557-614 (SQKHEKQDLKELKREKKKRKREIERLDKMTDEEKRVEQEKERELQALIEQVKRRKIED) forms a coiled coil.

The protein belongs to the DEAD box helicase family. DDX55/SPB4 subfamily. Component of pre-60S ribosomal complexes.

The protein localises to the nucleus. Its subcellular location is the nucleolus. The enzyme catalyses ATP + H2O = ADP + phosphate + H(+). Its function is as follows. ATP-binding RNA helicase involved in the biogenesis of 60S ribosomal subunits. Binds 90S pre-ribosomal particles and dissociates from pre-60S ribosomal particles after processing of 27SB pre-rRNA. Required for the normal formation of 18S rRNA through the processing of pre-rRNAs at sites A0, A1 and A2, and the normal formation of 25S and 5.8S rRNAs through the processing of pre-rRNAs at sites C1 and C2. In Sclerotinia sclerotiorum (strain ATCC 18683 / 1980 / Ss-1) (White mold), this protein is ATP-dependent rRNA helicase spb4.